A 349-amino-acid polypeptide reads, in one-letter code: Putative inosamine-phosphate amidinotransferase 2 (349 aa).

The protein belongs to the amidinotransferase family.

It carries out the reaction 1-amino-1-deoxy-scyllo-inositol 4-phosphate + L-arginine = 1-guanidino-1-deoxy-scyllo-inositol 4-phosphate + L-ornithine. It participates in antibiotic biosynthesis; streptomycin biosynthesis. Functionally, it is not obvious if strB2 participates in streptomycin biosynthesis as an inosamine-phosphate amidinotransferase. Attempt to measure its activity have failed and the nucleophilic cysteine which is the key residue for amidine transfer is not conserved but replaced by a glycine residue. This Streptomyces griseus protein is Putative inosamine-phosphate amidinotransferase 2 (strB2).